Reading from the N-terminus, the 349-residue chain is Isopentenyl-diphosphate delta-isomerase (349 aa).

Residue 6-7 (RK) participates in substrate binding. Residues 62-64 (AMT), S93, and N122 contribute to the FMN site. A substrate-binding site is contributed by Q152. E153 provides a ligand contact to Mg(2+). Residues K184, T214, 258 to 259 (GG), and 280 to 281 (AG) each bind FMN.

The protein belongs to the IPP isomerase type 2 family. In terms of assembly, homooctamer. Dimer of tetramers. FMN serves as cofactor. The cofactor is NADPH. Requires Mg(2+) as cofactor.

It localises to the cytoplasm. The catalysed reaction is isopentenyl diphosphate = dimethylallyl diphosphate. Involved in the biosynthesis of isoprenoids. Catalyzes the 1,3-allylic rearrangement of the homoallylic substrate isopentenyl (IPP) to its allylic isomer, dimethylallyl diphosphate (DMAPP). This Bacillus cereus (strain B4264) protein is Isopentenyl-diphosphate delta-isomerase.